The sequence spans 190 residues: Elongation factor P (190 aa).

The protein belongs to the elongation factor P family.

The protein resides in the cytoplasm. The protein operates within protein biosynthesis; polypeptide chain elongation. Functionally, involved in peptide bond synthesis. Stimulates efficient translation and peptide-bond synthesis on native or reconstituted 70S ribosomes in vitro. Probably functions indirectly by altering the affinity of the ribosome for aminoacyl-tRNA, thus increasing their reactivity as acceptors for peptidyl transferase. In Persephonella marina (strain DSM 14350 / EX-H1), this protein is Elongation factor P.